The chain runs to 181 residues: MTVPCAALVLALGLAFGQSSQGNDEESEYSGQSITEEENSEDETTRSALATVTTEALAENVNSTHTNDTSNQVEFILMVAIPLAALLILLFMVLIATYFKSKRPKQEPSSQGSQSALQTHELGGETLKVPIFEEDTPSVMEIEMEELDKWMNSMNRNADYECLPTLKEEKEPNPSPSDNES.

Residues 1–22 (MTVPCAALVLALGLAFGQSSQG) form the signal peptide. Residues 19 to 47 (SSQGNDEESEYSGQSITEEENSEDETTRS) are disordered. Topologically, residues 23 to 74 (NDEESEYSGQSITEEENSEDETTRSALATVTTEALAENVNSTHTNDTSNQVE) are extracellular. A helical membrane pass occupies residues 75 to 95 (FILMVAIPLAALLILLFMVLI). Over 96-181 (ATYFKSKRPK…PNPSPSDNES (86 aa)) the chain is Cytoplasmic. The segment at 103–122 (RPKQEPSSQGSQSALQTHEL) is disordered. The segment covering 107 to 118 (EPSSQGSQSALQ) has biased composition (polar residues). The residue at position 160 (Y160) is a Phosphotyrosine. Residues 161–181 (ECLPTLKEEKEPNPSPSDNES) form a disordered region. S177 carries the phosphoserine modification.

The protein resides in the membrane. This chain is Transmembrane protein 154 (Tmem154), found in Mus musculus (Mouse).